Reading from the N-terminus, the 466-residue chain is Uronate isomerase (466 aa).

Belongs to the metallo-dependent hydrolases superfamily. Uronate isomerase family.

The catalysed reaction is D-glucuronate = D-fructuronate. It catalyses the reaction aldehydo-D-galacturonate = keto-D-tagaturonate. It participates in carbohydrate metabolism; pentose and glucuronate interconversion. The polypeptide is Uronate isomerase (Caldanaerobacter subterraneus subsp. tengcongensis (strain DSM 15242 / JCM 11007 / NBRC 100824 / MB4) (Thermoanaerobacter tengcongensis)).